The following is a 407-amino-acid chain: Arylacetamide deacetylase-like 3 (407 aa).

Positions 119 to 121 (HGG) match the Involved in the stabilization of the negatively charged intermediate by the formation of the oxyanion hole motif. Active-site residues include serine 193, aspartate 347, and histidine 377.

The protein belongs to the 'GDXG' lipolytic enzyme family.

This chain is Arylacetamide deacetylase-like 3 (AADACL3), found in Homo sapiens (Human).